The chain runs to 322 residues: 4-hydroxy-3-methylbut-2-enyl diphosphate reductase 1 (322 aa).

Cys-18 provides a ligand contact to [4Fe-4S] cluster. His-47 and His-82 together coordinate (2E)-4-hydroxy-3-methylbut-2-enyl diphosphate. Residues His-47 and His-82 each contribute to the dimethylallyl diphosphate site. His-47 and His-82 together coordinate isopentenyl diphosphate. Residue Cys-104 participates in [4Fe-4S] cluster binding. His-132 is a binding site for (2E)-4-hydroxy-3-methylbut-2-enyl diphosphate. Position 132 (His-132) interacts with dimethylallyl diphosphate. Position 132 (His-132) interacts with isopentenyl diphosphate. Residue Glu-134 is the Proton donor of the active site. A (2E)-4-hydroxy-3-methylbut-2-enyl diphosphate-binding site is contributed by Thr-173. Position 203 (Cys-203) interacts with [4Fe-4S] cluster. Ser-231, Ser-232, Asn-233, and Ser-276 together coordinate (2E)-4-hydroxy-3-methylbut-2-enyl diphosphate. Dimethylallyl diphosphate is bound by residues Ser-231, Ser-232, Asn-233, and Ser-276. Isopentenyl diphosphate is bound by residues Ser-231, Ser-232, Asn-233, and Ser-276.

The protein belongs to the IspH family. [4Fe-4S] cluster serves as cofactor.

It carries out the reaction isopentenyl diphosphate + 2 oxidized [2Fe-2S]-[ferredoxin] + H2O = (2E)-4-hydroxy-3-methylbut-2-enyl diphosphate + 2 reduced [2Fe-2S]-[ferredoxin] + 2 H(+). It catalyses the reaction dimethylallyl diphosphate + 2 oxidized [2Fe-2S]-[ferredoxin] + H2O = (2E)-4-hydroxy-3-methylbut-2-enyl diphosphate + 2 reduced [2Fe-2S]-[ferredoxin] + 2 H(+). The protein operates within isoprenoid biosynthesis; dimethylallyl diphosphate biosynthesis; dimethylallyl diphosphate from (2E)-4-hydroxy-3-methylbutenyl diphosphate: step 1/1. Its pathway is isoprenoid biosynthesis; isopentenyl diphosphate biosynthesis via DXP pathway; isopentenyl diphosphate from 1-deoxy-D-xylulose 5-phosphate: step 6/6. In terms of biological role, catalyzes the conversion of 1-hydroxy-2-methyl-2-(E)-butenyl 4-diphosphate (HMBPP) into a mixture of isopentenyl diphosphate (IPP) and dimethylallyl diphosphate (DMAPP). Acts in the terminal step of the DOXP/MEP pathway for isoprenoid precursor biosynthesis. In Bradyrhizobium diazoefficiens (strain JCM 10833 / BCRC 13528 / IAM 13628 / NBRC 14792 / USDA 110), this protein is 4-hydroxy-3-methylbut-2-enyl diphosphate reductase 1.